Consider the following 327-residue polypeptide: Glycerol-3-phosphate acyltransferase (327 aa).

The next 5 helical transmembrane spans lie at 3–23 (SLLW…LLFA), 52–72 (VGVL…AVAL), 78–98 (TVFH…SCFL), 112–132 (VFLP…LAVI), and 152–172 (MLLL…MVLV). Disordered regions lie at residues 184–212 (SRGE…EAAA) and 233–327 (PSTE…SSGQ). The segment covering 199 to 212 (AQGTDAGAAPEAAA) has biased composition (low complexity). The span at 237 to 246 (AAPSQETSDA) shows a compositional bias: polar residues. Positions 259–271 (EGDKRENEEHDNA) are enriched in basic and acidic residues.

This sequence belongs to the PlsY family. Probably interacts with PlsX.

The protein localises to the cell inner membrane. The catalysed reaction is an acyl phosphate + sn-glycerol 3-phosphate = a 1-acyl-sn-glycero-3-phosphate + phosphate. It participates in lipid metabolism; phospholipid metabolism. Functionally, catalyzes the transfer of an acyl group from acyl-phosphate (acyl-PO(4)) to glycerol-3-phosphate (G3P) to form lysophosphatidic acid (LPA). This enzyme utilizes acyl-phosphate as fatty acyl donor, but not acyl-CoA or acyl-ACP. The chain is Glycerol-3-phosphate acyltransferase from Nitratidesulfovibrio vulgaris (strain ATCC 29579 / DSM 644 / CCUG 34227 / NCIMB 8303 / VKM B-1760 / Hildenborough) (Desulfovibrio vulgaris).